We begin with the raw amino-acid sequence, 100 residues long: Urease subunit gamma (100 aa).

The protein belongs to the urease gamma subunit family. In terms of assembly, heterotrimer of UreA (gamma), UreB (beta) and UreC (alpha) subunits. Three heterotrimers associate to form the active enzyme.

Its subcellular location is the cytoplasm. It carries out the reaction urea + 2 H2O + H(+) = hydrogencarbonate + 2 NH4(+). The protein operates within nitrogen metabolism; urea degradation; CO(2) and NH(3) from urea (urease route): step 1/1. This chain is Urease subunit gamma, found in Prochlorococcus marinus (strain MIT 9313).